The following is a 168-amino-acid chain: Photosystem I assembly protein Ycf3 (168 aa).

TPR repeat units follow at residues 29-62 (AFSY…EEDP), 66-99 (SYTL…NANL), and 117-150 (AQSL…APDN).

Belongs to the Ycf3 family.

Its subcellular location is the plastid. The protein resides in the chloroplast thylakoid membrane. In terms of biological role, essential for the assembly of the photosystem I (PSI) complex. May act as a chaperone-like factor to guide the assembly of the PSI subunits. This chain is Photosystem I assembly protein Ycf3, found in Phaeodactylum tricornutum (strain CCAP 1055/1).